A 464-amino-acid chain; its full sequence is ATP synthase subunit beta (464 aa).

151–158 (GGAGVGKT) provides a ligand contact to ATP.

Belongs to the ATPase alpha/beta chains family. F-type ATPases have 2 components, CF(1) - the catalytic core - and CF(0) - the membrane proton channel. CF(1) has five subunits: alpha(3), beta(3), gamma(1), delta(1), epsilon(1). CF(0) has three main subunits: a(1), b(2) and c(9-12). The alpha and beta chains form an alternating ring which encloses part of the gamma chain. CF(1) is attached to CF(0) by a central stalk formed by the gamma and epsilon chains, while a peripheral stalk is formed by the delta and b chains.

It is found in the cell membrane. The enzyme catalyses ATP + H2O + 4 H(+)(in) = ADP + phosphate + 5 H(+)(out). In terms of biological role, produces ATP from ADP in the presence of a proton gradient across the membrane. The catalytic sites are hosted primarily by the beta subunits. In Clostridium kluyveri (strain ATCC 8527 / DSM 555 / NBRC 12016 / NCIMB 10680 / K1), this protein is ATP synthase subunit beta.